A 295-amino-acid polypeptide reads, in one-letter code: Deleted in azoospermia-like (295 aa).

A compositionally biased stretch (polar residues) spans 1–10 (MSTANPETPN). Residues 1–25 (MSTANPETPNSTISREASTQSSSAA) form a disordered region. The span at 11–25 (STISREASTQSSSAA) shows a compositional bias: low complexity. One can recognise an RRM domain in the interval 40 to 115 (NTVFVGGIDV…KKLKLGPAIR (76 aa)). Positions 80–132 (KGYGFVSFFNDVDVQKIVESQINFHGKKLKLGPAIRKQNLCAYHVQPRPLVFN) are homodimerization. The DAZ domain maps to 167–190 (AYPTYPNSPVQVITGYQLPVYNYQ). At Tyr-276 the chain carries Phosphotyrosine.

This sequence belongs to the RRM DAZ family. As to quaternary structure, homodimer and heterodimer. Multiple DAZL RRMs can bind to a single RNA containing multiple GUU triplets. Forms a heterodimer with DAZ. Interacts with BOLL, DAZAP1 and DAZAP2. Interacts with PUM2. As to expression, testis specific.

It is found in the cytoplasm. The protein resides in the nucleus. In terms of biological role, RNA-binding protein, which is essential for gametogenesis in both males and females. Plays a central role during spermatogenesis. Acts by binding to the 3'-UTR of mRNA, specifically recognizing GUU triplets, and thereby regulating the translation of key transcripts. The sequence is that of Deleted in azoospermia-like (DAZL) from Homo sapiens (Human).